The sequence spans 291 residues: Trimeric intracellular cation channel type B (291 aa).

Residues 1-19 (MDSPWDELALAFSRTSMFP) are Lumenal-facing. The helical transmembrane segment at 20 to 33 (FFDIAHYLVSVMAV) threads the bilayer. The Cytoplasmic segment spans residues 34–50 (KRQPGAAALAWKNPISS). The chain crosses the membrane as a helical span at residues 51 to 70 (WFTAMLHCFGGGILSCLLLA). The Lumenal portion of the chain corresponds to 71 to 82 (EPPLKFLANHTN). Residues 83–99 (ILLASSIWYITFFCPHD) form a helical membrane-spanning segment. Residues 100 to 104 (LVSQG) lie on the Cytoplasmic side of the membrane. Residues 105–121 (YSYLPVQLLASGMKEVT) traverse the membrane as a helical segment. Residues Lys-118 and Arg-122 each coordinate a 1,2-diacyl-sn-glycero-3-phospho-(1D-myo-inositol-4,5-bisphosphate). At 122–139 (RTWKIVGGVTHANSYYKN) the chain is on the lumenal side. The chain crosses the membrane as a helical span at residues 140-156 (GWIVMIAIGWARGAGGT). The Cytoplasmic segment spans residues 157–179 (IITNFERLVKGDWKPEGDEWLKM). A helical transmembrane segment spans residues 180 to 195 (SYPAKVTLLGSVIFTF). Residues 196–207 (QHTQHLAISKHN) lie on the Lumenal side of the membrane. A helical membrane pass occupies residues 208–227 (LMFLYTIFIVATKITMMTTQ). Topologically, residues 228–291 (TSTMTFAPFE…VKKKHTKKNE (64 aa)) are cytoplasmic. Residues 256–291 (KKSEAKSPSNGVGSLASKPVDVASDNVKKKHTKKNE) form a disordered region. Ser-262 bears the Phosphoserine mark.

It belongs to the TMEM38 family. As to quaternary structure, homotrimer; conformation seems to be controled by binding to diacylglycerol (DAG).

Its subcellular location is the endoplasmic reticulum membrane. The enzyme catalyses K(+)(in) = K(+)(out). Its activity is regulated as follows. Channel activity is activated by increased cytosolic Ca(2+) levels and blocked by luminal high Ca(2+) levels. In terms of biological role, intracellular monovalent cation channel required for maintenance of rapid intracellular calcium release. Acts as a potassium counter-ion channel that functions in synchronization with calcium release from intracellular stores. Activated by increased cytosolic Ca(2+) levels. In Homo sapiens (Human), this protein is Trimeric intracellular cation channel type B.